Reading from the N-terminus, the 625-residue chain is Exonuclease mut-7 homolog (625 aa).

The residue at position 17 (serine 17) is a Phosphoserine. Positions 410 to 602 (LIIVNKADEF…IYNTLIERVS (193 aa)) constitute a 3'-5' exonuclease domain.

It belongs to the mut-7 family. In terms of assembly, interacts with AGO1; the interaction is not RNA dependent. Requires Mg(2+) as cofactor.

Possesses 3'-5' exoribonuclease activity. Required for 3'-end trimming of AGO1-bound miRNAs, in particular multiple-isoform miRNAs, which represents a critical step in miRNA maturation. The polypeptide is Exonuclease mut-7 homolog (Nbr) (Drosophila melanogaster (Fruit fly)).